A 337-amino-acid chain; its full sequence is Ketol-acid reductoisomerase (NADP(+)) (337 aa).

The 181-residue stretch at 3–183 folds into the KARI N-terminal Rossmann domain; sequence VEVFYDDDAD…GGTRAGVIKT (181 aa). NADP(+)-binding positions include 26-29, Ser-52, Ser-54, and 84-87; these read YGSQ and DTAQ. Residue His-109 is part of the active site. Gly-135 lines the NADP(+) pocket. One can recognise a KARI C-terminal knotted domain in the interval 184–329; sequence TFTEETETDL…GRLRAMMSWV (146 aa). Asp-192, Glu-196, Glu-228, and Glu-232 together coordinate Mg(2+). Substrate is bound at residue Ser-253.

It belongs to the ketol-acid reductoisomerase family. Requires Mg(2+) as cofactor.

The enzyme catalyses (2R)-2,3-dihydroxy-3-methylbutanoate + NADP(+) = (2S)-2-acetolactate + NADPH + H(+). The catalysed reaction is (2R,3R)-2,3-dihydroxy-3-methylpentanoate + NADP(+) = (S)-2-ethyl-2-hydroxy-3-oxobutanoate + NADPH + H(+). It functions in the pathway amino-acid biosynthesis; L-isoleucine biosynthesis; L-isoleucine from 2-oxobutanoate: step 2/4. Its pathway is amino-acid biosynthesis; L-valine biosynthesis; L-valine from pyruvate: step 2/4. Its function is as follows. Involved in the biosynthesis of branched-chain amino acids (BCAA). Catalyzes an alkyl-migration followed by a ketol-acid reduction of (S)-2-acetolactate (S2AL) to yield (R)-2,3-dihydroxy-isovalerate. In the isomerase reaction, S2AL is rearranged via a Mg-dependent methyl migration to produce 3-hydroxy-3-methyl-2-ketobutyrate (HMKB). In the reductase reaction, this 2-ketoacid undergoes a metal-dependent reduction by NADPH to yield (R)-2,3-dihydroxy-isovalerate. The polypeptide is Ketol-acid reductoisomerase (NADP(+)) (Salinispora tropica (strain ATCC BAA-916 / DSM 44818 / JCM 13857 / NBRC 105044 / CNB-440)).